Consider the following 393-residue polypeptide: NAD(P)H-quinone oxidoreductase subunit H, chloroplastic (393 aa).

This sequence belongs to the complex I 49 kDa subunit family. As to quaternary structure, NDH is composed of at least 16 different subunits, 5 of which are encoded in the nucleus.

The protein resides in the plastid. Its subcellular location is the chloroplast thylakoid membrane. The catalysed reaction is a plastoquinone + NADH + (n+1) H(+)(in) = a plastoquinol + NAD(+) + n H(+)(out). The enzyme catalyses a plastoquinone + NADPH + (n+1) H(+)(in) = a plastoquinol + NADP(+) + n H(+)(out). Its function is as follows. NDH shuttles electrons from NAD(P)H:plastoquinone, via FMN and iron-sulfur (Fe-S) centers, to quinones in the photosynthetic chain and possibly in a chloroplast respiratory chain. The immediate electron acceptor for the enzyme in this species is believed to be plastoquinone. Couples the redox reaction to proton translocation, and thus conserves the redox energy in a proton gradient. The polypeptide is NAD(P)H-quinone oxidoreductase subunit H, chloroplastic (Vitis vinifera (Grape)).